The primary structure comprises 247 residues: Ice-binding protein (247 aa).

The signal sequence occupies residues 1–19 (MTFSILSIFVFGLISSSVA). Asparagine 219 carries N-linked (GlcNAc...) asparagine glycosylation.

This sequence belongs to the ice-binding protein family.

Its subcellular location is the secreted. In terms of biological role, binds ice crystals and most probably inhibits their growth in order to prevent cell damage from extracellular ice. This Flammulina populicola (Enokitake mushroom) protein is Ice-binding protein.